Consider the following 764-residue polypeptide: Polyribonucleotide nucleotidyltransferase (764 aa).

The Mg(2+) site is built by Asp541 and Asp547. The 60-residue stretch at 607-666 (PRVTAIKIPVDKIGEVIGPKGKVINQITEDTGANISIEDDGTVFVGATDGPSAQAAIDAI) folds into the KH domain. Positions 678–747 (GERFLGTVVK…NRGKISLVPV (70 aa)) constitute an S1 motif domain.

Belongs to the polyribonucleotide nucleotidyltransferase family. The cofactor is Mg(2+).

The protein localises to the cytoplasm. The enzyme catalyses RNA(n+1) + phosphate = RNA(n) + a ribonucleoside 5'-diphosphate. Its function is as follows. Involved in mRNA degradation. Catalyzes the phosphorolysis of single-stranded polyribonucleotides processively in the 3'- to 5'-direction. The protein is Polyribonucleotide nucleotidyltransferase of Nocardia farcinica (strain IFM 10152).